The chain runs to 439 residues: 23S rRNA (uracil(1939)-C(5))-methyltransferase RlmD (439 aa).

Positions Met-1–Gln-54 constitute a TRAM domain. [4Fe-4S] cluster-binding residues include Cys-67, Cys-73, Cys-76, and Cys-155. S-adenosyl-L-methionine-binding residues include Gln-264, Phe-293, Asn-298, Glu-314, Asn-342, and Asp-363. The active-site Nucleophile is the Cys-391.

Belongs to the class I-like SAM-binding methyltransferase superfamily. RNA M5U methyltransferase family. RlmD subfamily.

The catalysed reaction is uridine(1939) in 23S rRNA + S-adenosyl-L-methionine = 5-methyluridine(1939) in 23S rRNA + S-adenosyl-L-homocysteine + H(+). Catalyzes the formation of 5-methyl-uridine at position 1939 (m5U1939) in 23S rRNA. The sequence is that of 23S rRNA (uracil(1939)-C(5))-methyltransferase RlmD from Nitrosospira multiformis (strain ATCC 25196 / NCIMB 11849 / C 71).